Here is a 40-residue protein sequence, read N- to C-terminus: Natriuretic peptide PtNP-a (40 aa).

A disulfide bond links Cys9 and Cys25. Polar residues predominate over residues 17-34; it reads ISNTSGMGCRNPIQNRPK. The segment at 17–40 is disordered; that stretch reads ISNTSGMGCRNPIQNRPKSTPGGS.

This sequence belongs to the natriuretic peptide family. Expressed by the venom gland.

It localises to the secreted. In terms of biological role, snake venom natriuretic peptide that targets NPR1 and possibly NPR2. Exhibits hypotensive and vasodepressor activities. Recombinant PtNP-a demonstrates a dose-dependent stimulation of cGMP production via the natriuretic peptide receptor 1 (NPR1) (EC(50)=563 nM) in Madine Darby Canine Kidney (MDCK) cells. It also inhibits the angiotensin converting enzyme (ACE). The chain is Natriuretic peptide PtNP-a from Pseudonaja textilis (Eastern brown snake).